We begin with the raw amino-acid sequence, 176 residues long: O-acetyl-ADP-ribose deacetylase (176 aa).

The Macro domain occupies 1 to 175; the sequence is MSGRINVVQG…LYQRLLGQYD (175 aa). Substrate is bound by residues 11–12, Asn25, 33–35, and 122–126; these read DI, GVD, and STGIY. Catalysis depends on Asp35, which acts as the Proton acceptor.

Belongs to the MacroD-type family. YmdB subfamily. In terms of assembly, homodimer. Interacts with RNase III.

The enzyme catalyses 3''-O-acetyl-ADP-D-ribose + H2O = ADP-D-ribose + acetate + H(+). It catalyses the reaction 2''-O-acetyl-ADP-D-ribose + H2O = ADP-D-ribose + acetate + H(+). Its function is as follows. Deacetylates O-acetyl-ADP ribose to yield ADP-ribose and free acetate. Down-regulates ribonuclease 3 (RNase III) activity. Acts by interacting directly with the region of the ribonuclease that is required for dimerization/activation. The sequence is that of O-acetyl-ADP-ribose deacetylase from Cronobacter turicensis (strain DSM 18703 / CCUG 55852 / LMG 23827 / z3032).